The chain runs to 1102 residues: Carbamoyl phosphate synthase large chain (1102 aa).

The interval 1–408 (MPKRTDIQSV…AFQKALRSLE (408 aa)) is carboxyphosphate synthetic domain. 12 residues coordinate ATP: Arg-129, Arg-175, Gly-181, Gly-182, Glu-214, Ile-216, Glu-221, Gly-247, Val-248, His-249, Gln-291, and Glu-305. Residues 137 to 334 (EEVRKKIGHG…IAKIAAKLAV (198 aa)) form the ATP-grasp 1 domain. 3 residues coordinate Mg(2+): Gln-291, Glu-305, and Asn-307. Mn(2+) is bound by residues Gln-291, Glu-305, and Asn-307. An oligomerization domain region spans residues 409–551 (KKGSQFTFVG…YFYSSYDEES (143 aa)). A carbamoyl phosphate synthetic domain region spans residues 552–954 (EVAPREKPAV…AYAKSQAGAY (403 aa)). An ATP-grasp 2 domain is found at 682 to 873 (GRVLAEAGLP…LAKAAARISL (192 aa)). Positions 718, 757, 759, 764, 789, 790, 791, 792, 832, and 844 each coordinate ATP. Mg(2+)-binding residues include Gln-832, Glu-844, and Asn-846. Gln-832, Glu-844, and Asn-846 together coordinate Mn(2+). Residues 955–1100 (GPLPTKGRAF…QEHAAFLIAA (146 aa)) enclose the MGS-like domain. Residues 955–1102 (GPLPTKGRAF…HAAFLIAARD (148 aa)) are allosteric domain.

It belongs to the CarB family. As to quaternary structure, composed of two chains; the small (or glutamine) chain promotes the hydrolysis of glutamine to ammonia, which is used by the large (or ammonia) chain to synthesize carbamoyl phosphate. Tetramer of heterodimers (alpha,beta)4. The cofactor is Mg(2+). Mn(2+) serves as cofactor.

The catalysed reaction is hydrogencarbonate + L-glutamine + 2 ATP + H2O = carbamoyl phosphate + L-glutamate + 2 ADP + phosphate + 2 H(+). The enzyme catalyses hydrogencarbonate + NH4(+) + 2 ATP = carbamoyl phosphate + 2 ADP + phosphate + 2 H(+). The protein operates within amino-acid biosynthesis; L-arginine biosynthesis; carbamoyl phosphate from bicarbonate: step 1/1. It participates in pyrimidine metabolism; UMP biosynthesis via de novo pathway; (S)-dihydroorotate from bicarbonate: step 1/3. Its function is as follows. Large subunit of the glutamine-dependent carbamoyl phosphate synthetase (CPSase). CPSase catalyzes the formation of carbamoyl phosphate from the ammonia moiety of glutamine, carbonate, and phosphate donated by ATP, constituting the first step of 2 biosynthetic pathways, one leading to arginine and/or urea and the other to pyrimidine nucleotides. The large subunit (synthetase) binds the substrates ammonia (free or transferred from glutamine from the small subunit), hydrogencarbonate and ATP and carries out an ATP-coupled ligase reaction, activating hydrogencarbonate by forming carboxy phosphate which reacts with ammonia to form carbamoyl phosphate. In Streptomyces coelicolor (strain ATCC BAA-471 / A3(2) / M145), this protein is Carbamoyl phosphate synthase large chain.